We begin with the raw amino-acid sequence, 217 residues long: Uracil-DNA glycosylase (217 aa).

Asp-62 (proton acceptor) is an active-site residue.

This sequence belongs to the uracil-DNA glycosylase (UDG) superfamily. UNG family.

It localises to the cytoplasm. It catalyses the reaction Hydrolyzes single-stranded DNA or mismatched double-stranded DNA and polynucleotides, releasing free uracil.. In terms of biological role, excises uracil residues from the DNA which can arise as a result of misincorporation of dUMP residues by DNA polymerase or due to deamination of cytosine. This is Uracil-DNA glycosylase from Streptococcus pneumoniae (strain Hungary19A-6).